The sequence spans 97 residues: YcgL domain-containing protein Pfl01_1389 (97 aa).

Residues 3–87 (RICSIYQSSK…AEEEYIEHLP (85 aa)) form the YcgL domain.

This Pseudomonas fluorescens (strain Pf0-1) protein is YcgL domain-containing protein Pfl01_1389.